Reading from the N-terminus, the 514-residue chain is Ubiquitin carboxyl-terminal hydrolase 22 (514 aa).

A UBP-type zinc finger spans residues 10-127 (PGCAHLGSFK…KEEQRKAWKM (118 aa)). Zn(2+) contacts are provided by Cys-12, His-14, Cys-52, Cys-55, Cys-65, Cys-68, Cys-73, His-78, His-82, His-88, Cys-101, and Cys-104. At Lys-118 the chain carries N6-acetyllysine. At Thr-136 the chain carries Phosphothreonine. Residues 165-509 (RGLINLGNTC…EGYLLFYHKQ (345 aa)) enclose the USP domain. Residue Cys-174 is the Nucleophile of the active site. Phosphoserine is present on Ser-226. His-468 acts as the Proton acceptor in catalysis.

It belongs to the peptidase C19 family. UBP8 subfamily. In terms of assembly, component of some SAGA transcription coactivator-HAT complexes, at least composed of ATXN7, ATXN7L3, ENY2, GCN5L2, SUPT3H, TAF10, TRRAP and USP22. Within the SAGA complex, ATXN7L3, ENY2 and USP22 form a subcomplex required for histone deubiquitination. Interacts directly with ATXN7L3; leading to its recruitment to the SAGA complex. Interacts with ATXN7L3 and weakly with ATXN7L3B. Interacts with MED1. Post-translationally, phosphorylated in G2/M phase, but not in G1 phase by CDK1. Ubiquitinated and subsequently degraded in a CDC20-dependent manner.

It is found in the nucleus. The protein resides in the cytoplasm. The catalysed reaction is Thiol-dependent hydrolysis of ester, thioester, amide, peptide and isopeptide bonds formed by the C-terminal Gly of ubiquitin (a 76-residue protein attached to proteins as an intracellular targeting signal).. In terms of biological role, deubiquitinase that plays a role in several cellular processes including transcriptional regulation, cell cycle progression or innate immunity. As part of the transcription regulatory histone acetylation (HAT) complex SAGA, catalyzes the deubiquitination of both histones H2A and H2B, thereby acting as a transcriptional coactivator. Recruited to specific gene promoters by activators such as MYC, where it is required for transcription. Facilitates cell-cycle progression by stabilizing CCNB1 and antagonizing its proteasome-mediated degradation in a cell cycle-specific manner. Modulates cell cycle progression and apoptosis also by antagonizing TP53 transcriptional activation through deacetylase SIRT1 stabilization. Plays multiple roles in immunity and inflammation. Participates in antiviral response by deubiquitinating the importin KPNA2, leading to IRF3 nuclear translocation and subsequent type I interferon production. Acts as a central regulator of type III IFN signaling by negatively regulating STING1 activation and ubiquitination. Inhibits NLRP3 inflammasome activation by promoting NLRP3 degradation through ATG5-dependent autophagy. Deubiquitinates CD274 to induce its stabilization and thereby participates in maintenance of immune tolerance to self. Controls necroptotic cell death by regulating RIPK3 phosphorylation and ubiquitination. During bacterial infection, promotes pro-inflammatory response by targeting TRAF6 and removing its 'Lys-48'-linked polyubiquitination. This Bos taurus (Bovine) protein is Ubiquitin carboxyl-terminal hydrolase 22 (USP22).